Reading from the N-terminus, the 565-residue chain is Tetratricopeptide repeat protein 39A (565 aa).

3 TPR repeats span residues 271-304 (AIFL…QQVW), 461-494 (CLIQ…EKKL), and 502-535 (PNAL…YKVY).

The protein belongs to the TTC39 family.

The sequence is that of Tetratricopeptide repeat protein 39A (ttc39a) from Danio rerio (Zebrafish).